A 270-amino-acid polypeptide reads, in one-letter code: Putative pyruvate, phosphate dikinase regulatory protein (270 aa).

Residue 151 to 158 (GVSRTSKT) coordinates ADP.

Belongs to the pyruvate, phosphate/water dikinase regulatory protein family. PDRP subfamily.

It carries out the reaction N(tele)-phospho-L-histidyl/L-threonyl-[pyruvate, phosphate dikinase] + ADP = N(tele)-phospho-L-histidyl/O-phospho-L-threonyl-[pyruvate, phosphate dikinase] + AMP + H(+). It catalyses the reaction N(tele)-phospho-L-histidyl/O-phospho-L-threonyl-[pyruvate, phosphate dikinase] + phosphate + H(+) = N(tele)-phospho-L-histidyl/L-threonyl-[pyruvate, phosphate dikinase] + diphosphate. In terms of biological role, bifunctional serine/threonine kinase and phosphorylase involved in the regulation of the pyruvate, phosphate dikinase (PPDK) by catalyzing its phosphorylation/dephosphorylation. In Streptococcus gordonii (strain Challis / ATCC 35105 / BCRC 15272 / CH1 / DL1 / V288), this protein is Putative pyruvate, phosphate dikinase regulatory protein.